A 495-amino-acid polypeptide reads, in one-letter code: MAKLSLAEQISQLANPKPKDVDIENFEDRDDGSESGGDVDYDSDLATEHYVKVGKSKLRDDAPALNPKYKAGKVSRKALYDDEDEDGDGADGFIDEDDEDDEEDDEEGEGNGFIDDEVEVDEEDQDEDGDEDMEDEQDEDESDEELSENENDSSARATLKELLREEKKASKQQAKEAIVSDAQKGFAIHKQTDLYETLLDARITFQKAVQSANALPISDTKAEELGEDITNTLQDTKAKLSDFISQIAKMRHNMAVQDNVFAADSVKLSTKRTFDATLDNMDKLDTEFKAYETSVLSKWSQKVQASSAASALNSSKFKALNQSSANQVAATLADMDRLVKRTRMNRSNVVILGEEQMGAIQDAEGENYYIFDDSDFYRNLLKDLIDRRMVDSGSQSSGVKTWTATKAKTKKNVDTRASKGRKLRYHVQDKVQNFAAPRPVFTWEDDQIDELFAGLLGQRVNFNEDDDGEEKEKEEKEEKEEQELVIPDDGLRIFG.

Disordered regions lie at residues 10-155 (ISQL…DSSA) and 462-495 (FNEDDDGEEKEKEEKEEKEEQELVIPDDGLRIFG). Over residues 23–45 (IENFEDRDDGSESGGDVDYDSDL) the composition is skewed to acidic residues. The span at 46–62 (ATEHYVKVGKSKLRDDA) shows a compositional bias: basic and acidic residues. Positions 81–151 (DDEDEDGDGA…SDEELSENEN (71 aa)) are enriched in acidic residues.

Belongs to the AATF family.

It localises to the nucleus. Its subcellular location is the nucleolus. The chain is Protein BFR2 (BFR2) from Yarrowia lipolytica (strain CLIB 122 / E 150) (Yeast).